Here is an 857-residue protein sequence, read N- to C-terminus: Bifunctional levopimaradiene synthase, chloroplastic (857 aa).

Residues 1–33 (MALPSSSLSSQIHTGATTQCIPHFHGSLNAGTS) constitute a chloroplast transit peptide. Position 257 (Lys257) interacts with substrate. Mg(2+) contacts are provided by Asp390 and Asp392. The DXDD motif motif lies at 390–393 (DIDD). Lys477 is a substrate binding site. Mg(2+) contacts are provided by Asp609, Asp613, Asn753, Thr757, and Glu761. The DDXXD motif signature appears at 609-613 (DDLYD).

This sequence belongs to the terpene synthase family. Tpsd subfamily. Mg(2+) is required as a cofactor.

It localises to the plastid. The protein resides in the chloroplast. The catalysed reaction is (2E,6E,10E)-geranylgeranyl diphosphate = (+)-copalyl diphosphate. The enzyme catalyses (+)-copalyl diphosphate = abieta-7,13-diene + diphosphate. It carries out the reaction (+)-copalyl diphosphate = abieta-8(14),12-diene + diphosphate. It catalyses the reaction (+)-copalyl diphosphate = neoabietadiene + diphosphate. It participates in terpene metabolism; oleoresin biosynthesis. Functionally, involved in defensive oleoresin formation in conifers in response to insect attack or other injury. Involved in diterpene (C20) olefins biosynthesis. Bifunctional enzyme that catalyzes two sequential cyclizations of geranylgeranyl diphosphate (GGPP) to levopimaradiene. Levopimaradiene is the major products of the enzyme with abietadiene and neoabietadiene. No activity with farnesyl diphosphate (FPP) as substrate. The chain is Bifunctional levopimaradiene synthase, chloroplastic from Pinus contorta (Shore pine).